A 104-amino-acid polypeptide reads, in one-letter code: Large ribosomal subunit protein bL21 (104 aa).

It belongs to the bacterial ribosomal protein bL21 family. In terms of assembly, part of the 50S ribosomal subunit. Contacts protein L20.

In terms of biological role, this protein binds to 23S rRNA in the presence of protein L20. This chain is Large ribosomal subunit protein bL21, found in Gluconacetobacter diazotrophicus (strain ATCC 49037 / DSM 5601 / CCUG 37298 / CIP 103539 / LMG 7603 / PAl5).